Reading from the N-terminus, the 802-residue chain is MAARGRRAWLSVLLGLVLGFVLASRLVLPRASELKRAGPRRRASPEGCRSGQAAASQAGGARGDARGAQLWPPGSDPDGGPRDRNFLFVGVMTAQKYLQTRAVAAYRTWSKTIPGKVQFFSSEGSDTSVPIPVVPLRGVDDSYPPQKKSFMMLKYMHDHYLDKYEWFMRADDDVYIKGDRLENFLRSLNSSEPLFLGQTGLGTTEEMGKLALEPGENFCMGGPGVIMSREVLRRMVPHIGKCLREMYTTHEDVEVGRCVRRFAGVQCVWSYEMQQLFYENYEQNKKGYIRDLHNSKIHQAITLHPNKNPPYQYRLHSYMLSRKISELRHRTIQLHREIVLMSKYSNTEIHKEDLQLGIPPSFMRFQPRQREEILEWEFLTGKYLYSAVDGQPPRRGMDSAQREALDDIVMQVMEMINANAKTRGRIIDFKEIQYGYRRVNPMYGAEYILDLLLLYKKHKGKKMTVPVRRHAYLQQTFSKIQFVEHEELDAQELAKRINQESGSLSFLSNSLKKLVPFQLPGSKSEHKEPKDKKINILIPLSGRFDMFVRFMGNFEKTCLIPNQNVKLVVLLFNSDSNPDKAKQVELMRDYRIKYPKADMQILPVSGEFSRALALEVGSSQFNNESLLFFCDVDLVFTTEFLQRCRANTVLGQQIYFPIIFSQYDPKIVYSGKVPSDNHFAFTQKTGFWRNYGFGITCIYKGDLVRVGGFDVSIQGWGLEDVDLFNKVVQAGLKTFRSQEVGVVHVHHPVFCDPNLDPKQYKMCLGSKASTYGSTQQLAEMWLEKNDPSYSKSSNNNGSVRTA.

Residues Met1–Arg7 are Cytoplasmic-facing. A helical; Signal-anchor for type II membrane protein membrane pass occupies residues Ala8–Leu28. The Lumenal segment spans residues Pro29–Ala802. Positions Leu34–Arg82 are disordered. 2 stretches are compositionally biased toward low complexity: residues Arg49–Gly59 and Arg66–Asp78. N-linked (GlcNAc...) asparagine glycosylation is found at Asn189 and Asn623. A divalent metal cation contacts are provided by Asp633 and His747. N-linked (GlcNAc...) asparagine glycosylation occurs at Asn796.

The protein belongs to the chondroitin N-acetylgalactosaminyltransferase family. The cofactor is Co(2+). Mn(2+) is required as a cofactor. Cd(2+) serves as cofactor. As to expression, ubiquitous, with the highest levels in placenta. Detected at low levels in brain, heart, skeletal muscle, colon, thymus, spleen, kidney, liver, adrenal gland, mammary gland, stomach, small intestine, lung and peripheral blood leukocytes.

Its subcellular location is the golgi apparatus. It is found in the golgi stack membrane. The protein resides in the secreted. It carries out the reaction 3-O-(beta-D-GlcA-(1-&gt;3)-beta-D-GalNAc-(1-&gt;4)-beta-D-GlcA-(1-&gt;3)-beta-D-Gal-(1-&gt;3)-beta-D-Gal-(1-&gt;4)-beta-D-Xyl)-L-seryl-[protein] + UDP-N-acetyl-alpha-D-galactosamine = 3-O-(beta-D-GalNAc-(1-&gt;4)-beta-D-GlcA-(1-&gt;3)-beta-D-GalNAc-(1-&gt;4)-beta-D-GlcA-(1-&gt;3)-beta-D-Gal-(1-&gt;3)-beta-D-Gal-(1-&gt;4)-beta-D-Xyl)-L-seryl-[protein] + UDP + H(+). The catalysed reaction is 3-O-{beta-D-GlcA-(1-&gt;3)-[beta-D-GalNAc-(1-&gt;4)-beta-D-GlcA-(1-&gt;3)](n)-beta-D-GalNAc-(1-&gt;4)-beta-D-GlcA-(1-&gt;3)-beta-D-Gal-(1-&gt;3)-beta-D-Gal-(1-&gt;4)-beta-D-Xyl}-L-seryl-[protein] + UDP-N-acetyl-alpha-D-galactosamine = 3-O-{[beta-D-GalNAc-(1-&gt;4)-beta-D-GlcA-(1-&gt;3)](n+1)-beta-D-GalNAc-(1-&gt;4)-beta-D-GlcA-(1-&gt;3)-beta-D-Gal-(1-&gt;3)-beta-D-Gal-(1-&gt;4)-beta-D-Xyl}-L-seryl-[protein] + UDP + H(+). The enzyme catalyses 3-O-(beta-D-GalNAc-(1-&gt;4)-beta-D-GlcA-(1-&gt;3)-beta-D-Gal-(1-&gt;3)-beta-D-Gal-(1-&gt;4)-beta-D-Xyl)-L-seryl-[protein] + UDP-alpha-D-glucuronate = 3-O-(beta-D-GlcA-(1-&gt;3)-beta-D-GalNAc-(1-&gt;4)-beta-D-GlcA-(1-&gt;3)-beta-D-Gal-(1-&gt;3)-beta-D-Gal-(1-&gt;4)-beta-D-Xyl)-L-seryl-[protein] + UDP + H(+). It catalyses the reaction 3-O-{[beta-D-GalNAc-(1-&gt;4)-beta-D-GlcA-(1-&gt;3)](n)-beta-D-GalNAc-(1-&gt;4)-beta-D-GlcA-(1-&gt;3)-beta-D-Gal-(1-&gt;3)-beta-D-Gal-(1-&gt;4)-beta-D-Xyl}-L-seryl-[protein] + UDP-alpha-D-glucuronate = 3-O-{beta-D-GlcA-(1-&gt;3)-[beta-D-GalNAc-(1-&gt;4)-beta-D-GlcA-(1-&gt;3)](n)-beta-D-GalNAc-(1-&gt;4)-beta-D-GlcA-(1-&gt;3)-beta-D-Gal-(1-&gt;3)-beta-D-Gal-(1-&gt;4)-beta-D-Xyl}-L-seryl-[protein] + UDP + H(+). In terms of biological role, has both beta-1,3-glucuronic acid and beta-1,4-N-acetylgalactosamine transferase activity. Transfers glucuronic acid (GlcUA) from UDP-GlcUA and N-acetylgalactosamine (GalNAc) from UDP-GalNAc to the non-reducing end of the elongating chondroitin polymer. Involved in the negative control of osteogenesis likely through the modulation of NOTCH signaling. The sequence is that of Chondroitin sulfate synthase 1 from Homo sapiens (Human).